The primary structure comprises 201 residues: Flavin prenyltransferase UbiX (201 aa).

FMN contacts are provided by residues G23–S25, S49, S103–T106, and R138. Dimethylallyl phosphate is bound by residues Y168 and K184.

The protein belongs to the UbiX/PAD1 family.

It carries out the reaction dimethylallyl phosphate + FMNH2 = prenylated FMNH2 + phosphate. Flavin prenyltransferase that catalyzes the synthesis of the prenylated FMN cofactor (prenyl-FMN) for 4-hydroxy-3-polyprenylbenzoic acid decarboxylase UbiD. The prenyltransferase is metal-independent and links a dimethylallyl moiety from dimethylallyl monophosphate (DMAP) to the flavin N5 and C6 atoms of FMN. The sequence is that of Flavin prenyltransferase UbiX from Saccharolobus solfataricus (strain ATCC 35092 / DSM 1617 / JCM 11322 / P2) (Sulfolobus solfataricus).